A 293-amino-acid chain; its full sequence is Bifunctional protein FolD (293 aa).

NADP(+)-binding positions include G165 to S167, T194, and V235.

Belongs to the tetrahydrofolate dehydrogenase/cyclohydrolase family. As to quaternary structure, homodimer.

The enzyme catalyses (6R)-5,10-methylene-5,6,7,8-tetrahydrofolate + NADP(+) = (6R)-5,10-methenyltetrahydrofolate + NADPH. It carries out the reaction (6R)-5,10-methenyltetrahydrofolate + H2O = (6R)-10-formyltetrahydrofolate + H(+). It participates in one-carbon metabolism; tetrahydrofolate interconversion. In terms of biological role, catalyzes the oxidation of 5,10-methylenetetrahydrofolate to 5,10-methenyltetrahydrofolate and then the hydrolysis of 5,10-methenyltetrahydrofolate to 10-formyltetrahydrofolate. This is Bifunctional protein FolD from Syntrophus aciditrophicus (strain SB).